Reading from the N-terminus, the 488-residue chain is G-patch domain and KOW motifs-containing protein (488 aa).

Over residues 1–11 the composition is skewed to pro residues; sequence MAGRESPPPSA. The interval 1 to 20 is disordered; the sequence is MAGRESPPPSAPSMAPISFG. The residue at position 2 (Ala-2) is an N-acetylalanine. Phosphoserine; by PKA is present on Ser-25. The interval 72–97 is disordered; it reads IQNGSRRQPLSKNPKPSSETSTVLMS. The span at 73 to 95 shows a compositional bias: polar residues; the sequence is QNGSRRQPLSKNPKPSSETSTVL. Residue Ser-115 is modified to Phosphoserine. A G-patch domain is found at 164–210; it reads VEAYGLAMLRGMGWKPGKGIGNTFSQVVKPRVNSIRPKGLGLGANRM. Disordered stretches follow at residues 216-241 and 295-367; these read ASVG…PQGL and QEFD…PRNK. The segment covering 224–236 has biased composition (basic and acidic residues); sequence PRPDGDRENDKEG. In terms of domain architecture, KOW 1 spans 231 to 258; it reads ENDKEGQPQGLMHGRAVVVLSGPYRGLY. Residues 307-331 show a composition bias toward polar residues; the sequence is VSQTSTEQQNRATGTASSLKAAQNQ. Basic and acidic residues-rich tracts occupy residues 332-341 and 349-363; these read EDSKRRQKGS and PDRQ…EKAA. Residues 401–428 enclose the KOW 2 domain; sequence PDTCVCRTDEGRVLEDVREDMLETLIPK. The residue at position 485 (Ser-485) is a Phosphoserine.

This sequence belongs to the MOS2 family. In terms of assembly, component of the minor spliceosome, which splices U12-type introns. Interacts with PRKX, PRKACB and DHX16. Post-translationally, phosphorylation regulates its ability to bind RNA.

It is found in the nucleus. Functionally, RNA-binding protein involved in pre-mRNA splicing. As a component of the minor spliceosome, involved in the splicing of U12-type introns in pre-mRNAs. The sequence is that of G-patch domain and KOW motifs-containing protein (Gpkow) from Mus musculus (Mouse).